The sequence spans 599 residues: NADH-ubiquinone oxidoreductase chain 5 (599 aa).

Transmembrane regions (helical) follow at residues 1–21, 41–61, 79–99, 114–134, 137–157, 166–186, 198–218, 237–257, 269–289, 297–317, 323–343, 362–382, 400–420, 453–473, 478–498, 509–529, and 578–598; these read MALM…PLVF, FITS…IIIL, LDLY…SIME, FLNY…ANNM, LFIG…WWYG, LQAI…MAWF, IFSL…AAMG, TPVS…FLLI, IMTT…ICAL, IIAF…GINQ, LHIC…GSII, MPLT…TPFM, INSW…AYST, LMLG…PVNM, MPFT…IVAM, MYPN…PTII, and GMLK…MLIM.

The protein belongs to the complex I subunit 5 family.

Its subcellular location is the mitochondrion inner membrane. It catalyses the reaction a ubiquinone + NADH + 5 H(+)(in) = a ubiquinol + NAD(+) + 4 H(+)(out). In terms of biological role, core subunit of the mitochondrial membrane respiratory chain NADH dehydrogenase (Complex I) that is believed to belong to the minimal assembly required for catalysis. Complex I functions in the transfer of electrons from NADH to the respiratory chain. The immediate electron acceptor for the enzyme is believed to be ubiquinone. This Geomys personatus (Texas pocket gopher) protein is NADH-ubiquinone oxidoreductase chain 5 (ND5).